The sequence spans 363 residues: DNA replication and repair protein RecF (363 aa).

An ATP-binding site is contributed by 30–37 (GPNGSGKT).

The protein belongs to the RecF family.

It localises to the cytoplasm. The RecF protein is involved in DNA metabolism; it is required for DNA replication and normal SOS inducibility. RecF binds preferentially to single-stranded, linear DNA. It also seems to bind ATP. This chain is DNA replication and repair protein RecF, found in Vibrio cholerae serotype O1 (strain ATCC 39541 / Classical Ogawa 395 / O395).